The primary structure comprises 490 residues: Cardiolipin synthase A (490 aa).

The next 2 helical transmembrane spans lie at 20-40 (LGLLLVGIQVLGFVAAIHAVL) and 49-69 (IAWATSLVFMPYLTLLPYLVF). PLD phosphodiesterase domains are found at residues 229–256 (VNFRNHRKVVVVDGECGFVGGHNVGVEY) and 403–430 (QPGFLHQKVVLVDRDTAAVGSANLDNRS). Active-site residues include H234, K236, D241, H408, K410, and D415.

Belongs to the phospholipase D family. Cardiolipin synthase subfamily. ClsA sub-subfamily.

It is found in the cell inner membrane. The enzyme catalyses 2 a 1,2-diacyl-sn-glycero-3-phospho-(1'-sn-glycerol) = a cardiolipin + glycerol. Its function is as follows. Catalyzes the reversible phosphatidyl group transfer from one phosphatidylglycerol molecule to another to form cardiolipin (CL) (diphosphatidylglycerol) and glycerol. In Pseudomonas aeruginosa (strain LESB58), this protein is Cardiolipin synthase A.